The chain runs to 734 residues: Photosystem I P700 chlorophyll a apoprotein A2 (734 aa).

Transmembrane regions (helical) follow at residues 46–69 (IFAS…FHVA), 135–158 (LYTG…LHLQ), 175–199 (LNHH…HVAI), 273–291 (MAHH…GHMY), 330–353 (LHFQ…QHMY), 369–395 (AALY…IFFI), 417–439 (AIIS…LYVH), and 517–535 (FLVH…LILV). The [4Fe-4S] cluster site is built by C559 and C568. The next 2 helical transmembrane spans lie at 575 to 596 (AFYL…YWHW) and 643 to 665 (LSVW…MFLI). The chlorophyll a site is built by H654, M662, and Y670. W671 is a binding site for phylloquinone. Residues 707–727 (LVGLAHFSVGYIFTYAAFLIA) form a helical membrane-spanning segment.

The protein belongs to the PsaA/PsaB family. The PsaA/B heterodimer binds the P700 chlorophyll special pair and subsequent electron acceptors. PSI consists of a core antenna complex that captures photons, and an electron transfer chain that converts photonic excitation into a charge separation. The eukaryotic PSI reaction center is composed of at least 11 subunits. Requires P700 is a chlorophyll a/chlorophyll a' dimer, A0 is one or more chlorophyll a, A1 is one or both phylloquinones and FX is a shared 4Fe-4S iron-sulfur center. as cofactor.

Its subcellular location is the plastid. The protein localises to the chloroplast thylakoid membrane. The catalysed reaction is reduced [plastocyanin] + hnu + oxidized [2Fe-2S]-[ferredoxin] = oxidized [plastocyanin] + reduced [2Fe-2S]-[ferredoxin]. PsaA and PsaB bind P700, the primary electron donor of photosystem I (PSI), as well as the electron acceptors A0, A1 and FX. PSI is a plastocyanin-ferredoxin oxidoreductase, converting photonic excitation into a charge separation, which transfers an electron from the donor P700 chlorophyll pair to the spectroscopically characterized acceptors A0, A1, FX, FA and FB in turn. Oxidized P700 is reduced on the lumenal side of the thylakoid membrane by plastocyanin. The protein is Photosystem I P700 chlorophyll a apoprotein A2 of Solanum tuberosum (Potato).